The chain runs to 123 residues: Ig heavy chain V region H8 (123 aa).

The region spanning 1 to 114 (EVKLVESGGG…BSYWYFDVWG (114 aa)) is the Ig-like domain.

The sequence is that of Ig heavy chain V region H8 from Mus musculus (Mouse).